The following is a 525-amino-acid chain: CBL-interacting protein kinase 21 (525 aa).

Residues 87-342 (YEMGRALGEG…ITGIRAHEWF (256 aa)) enclose the Protein kinase domain. ATP contacts are provided by residues 93–101 (LGEGHFGKV) and Lys116. The active-site Proton acceptor is Asp210. The interval 228–257 (DFGLSALPQNQRKDGLLHTTCGSPNYIAPE) is activation loop. One can recognise an NAF domain in the interval 372–401 (DIETSPAISQINAFQLIGMSSCLDLSGFFE). Positions 407–436 (ERKIRFVSNYSPTSLFEKIESTVTEKGFQV) are PPI.

It belongs to the protein kinase superfamily. CAMK Ser/Thr protein kinase family. SNF1 subfamily. The cofactor is Mn(2+).

The enzyme catalyses L-seryl-[protein] + ATP = O-phospho-L-seryl-[protein] + ADP + H(+). It carries out the reaction L-threonyl-[protein] + ATP = O-phospho-L-threonyl-[protein] + ADP + H(+). In terms of biological role, CIPK serine-threonine protein kinases interact with CBL proteins. Binding of a CBL protein to the regulatory NAF domain of CIPK protein lead to the activation of the kinase in a calcium-dependent manner. The protein is CBL-interacting protein kinase 21 (CIPK21) of Oryza sativa subsp. japonica (Rice).